The following is a 144-amino-acid chain: Oleosin H2 (144 aa).

Residue A2 is modified to N-acetylalanine. 3 consecutive transmembrane segments (helical) span residues 28–48 (VLAVVTLFPLGAVLLCLAGLI), 53–73 (IIGLAVATPLFVIFSPILVPA), and 75–95 (LTIALAVTGFLTSGAFGITAL). Positions 61–72 (PLFVIFSPILVP) match the Proline-knot motif. The segment at 124–144 (QETVGQKTREAGQRSQDVIRP) is disordered.

It belongs to the oleosin family. In terms of tissue distribution, expressed in seeds (at protein level).

It is found in the lipid droplet. Its subcellular location is the membrane. Its function is as follows. May have a structural role to stabilize the lipid body during desiccation of the seed by preventing coalescence of the oil. Probably interacts with both lipid and phospholipid moieties of lipid bodies. May also provide recognition signals for specific lipase anchorage in lipolysis during seedling growth. The polypeptide is Oleosin H2 (Sesamum indicum (Oriental sesame)).